The following is a 354-amino-acid chain: 3-dehydroquinate synthase (354 aa).

NAD(+)-binding positions include 66 to 71 (SGETSK), 100 to 104 (GATGD), 124 to 125 (TT), lysine 136, lysine 145, and 163 to 166 (FLET). Zn(2+) is bound by residues glutamate 178, histidine 242, and histidine 256.

The protein belongs to the sugar phosphate cyclases superfamily. Dehydroquinate synthase family. NAD(+) serves as cofactor. Co(2+) is required as a cofactor. It depends on Zn(2+) as a cofactor.

The protein resides in the cytoplasm. It catalyses the reaction 7-phospho-2-dehydro-3-deoxy-D-arabino-heptonate = 3-dehydroquinate + phosphate. Its pathway is metabolic intermediate biosynthesis; chorismate biosynthesis; chorismate from D-erythrose 4-phosphate and phosphoenolpyruvate: step 2/7. Catalyzes the conversion of 3-deoxy-D-arabino-heptulosonate 7-phosphate (DAHP) to dehydroquinate (DHQ). The sequence is that of 3-dehydroquinate synthase from Staphylococcus epidermidis (strain ATCC 35984 / DSM 28319 / BCRC 17069 / CCUG 31568 / BM 3577 / RP62A).